The following is a 164-amino-acid chain: Ecotin (164 aa).

A signal peptide spans 1–20 (MKMFVPAVVFAALASASAWA). A disulfide bond links cysteine 72 and cysteine 109.

This sequence belongs to the protease inhibitor I11 (ecotin) family. As to quaternary structure, homodimer.

The protein resides in the periplasm. Functionally, general inhibitor of pancreatic serine proteases: inhibits chymotrypsin, trypsin, elastases, factor X, kallikrein as well as a variety of other proteases. This is Ecotin from Salmonella paratyphi A (strain ATCC 9150 / SARB42).